A 459-amino-acid polypeptide reads, in one-letter code: Putrescine aminotransferase (459 aa).

Pyridoxal 5'-phosphate is bound by residues 150–151 and Q274; that span reads GT. K300 is modified (N6-(pyridoxal phosphate)lysine). T332 provides a ligand contact to pyridoxal 5'-phosphate.

It belongs to the class-III pyridoxal-phosphate-dependent aminotransferase family. Putrescine aminotransferase subfamily. Pyridoxal 5'-phosphate serves as cofactor.

It carries out the reaction an alkane-alpha,omega-diamine + 2-oxoglutarate = an omega-aminoaldehyde + L-glutamate. The catalysed reaction is putrescine + 2-oxoglutarate = 1-pyrroline + L-glutamate + H2O. It catalyses the reaction cadaverine + 2-oxoglutarate = 5-aminopentanal + L-glutamate. Its pathway is amine and polyamine degradation; putrescine degradation; 4-aminobutanal from putrescine (transaminase route): step 1/1. Its function is as follows. Catalyzes the aminotransferase reaction from putrescine to 2-oxoglutarate, leading to glutamate and 4-aminobutanal, which spontaneously cyclizes to form 1-pyrroline. This is the first step in one of two pathways for putrescine degradation, where putrescine is converted into 4-aminobutanoate (gamma-aminobutyrate or GABA) via 4-aminobutanal. Also functions as a cadaverine transaminase in a a L-lysine degradation pathway to succinate that proceeds via cadaverine, glutarate and L-2-hydroxyglutarate. The polypeptide is Putrescine aminotransferase (Escherichia coli O8 (strain IAI1)).